Consider the following 174-residue polypeptide: Probable carboxylesterase Culp5 (174 aa).

Residue Ser67 is the Nucleophile of the active site. An intrachain disulfide couples Cys137 to Cys144. Residue Asp141 is part of the active site. His153 serves as the catalytic Proton donor/acceptor.

Belongs to the cutinase family.

Does not exhibit cutinase activity. This Mycobacterium tuberculosis (strain ATCC 25618 / H37Rv) protein is Probable carboxylesterase Culp5.